The chain runs to 168 residues: Plastocyanin, chloroplastic (168 aa).

In terms of domain architecture, Plastocyanin-like spans 70 to 168 (VEVLLGGGDG…AGMVGKVTVN (99 aa)). 4 residues coordinate Cu cation: histidine 106, cysteine 153, histidine 156, and methionine 161.

Belongs to the plastocyanin family. Cu(2+) is required as a cofactor.

The protein resides in the plastid. The protein localises to the chloroplast thylakoid membrane. Participates in electron transfer between P700 and the cytochrome b6-f complex in photosystem I. This Spinacia oleracea (Spinach) protein is Plastocyanin, chloroplastic (PETE).